The sequence spans 146 residues: MTKTTMAVPGALLAAIALLSAAPAQAAAHRVTPGNWLYVTVTTGDARSSHISRLLTCDPPHGHAHAARACEELAAADGDITRIPPKRTFCPMIYAPVTADAHGEWNGRHVEYRHAFGNACGLEGETGAVFALSEQASDGPTPGLRS.

The N-terminal stretch at 1-26 (MTKTTMAVPGALLAAIALLSAAPAQA) is a signal peptide. Cystine bridges form between Cys-57/Cys-70 and Cys-90/Cys-120.

This sequence belongs to the protease inhibitor I16 (SSI) family.

It is found in the secreted. The chain is Putative serine protease inhibitor SAV_2156 from Streptomyces avermitilis (strain ATCC 31267 / DSM 46492 / JCM 5070 / NBRC 14893 / NCIMB 12804 / NRRL 8165 / MA-4680).